The primary structure comprises 268 residues: Tryptophan synthase alpha chain (268 aa).

Active-site proton acceptor residues include glutamate 49 and aspartate 60.

This sequence belongs to the TrpA family. As to quaternary structure, tetramer of two alpha and two beta chains.

It catalyses the reaction (1S,2R)-1-C-(indol-3-yl)glycerol 3-phosphate + L-serine = D-glyceraldehyde 3-phosphate + L-tryptophan + H2O. It functions in the pathway amino-acid biosynthesis; L-tryptophan biosynthesis; L-tryptophan from chorismate: step 5/5. In terms of biological role, the alpha subunit is responsible for the aldol cleavage of indoleglycerol phosphate to indole and glyceraldehyde 3-phosphate. This is Tryptophan synthase alpha chain from Shigella flexneri serotype 5b (strain 8401).